Here is a 54-residue protein sequence, read N- to C-terminus: Ductus ejaculatorius peptide 99B (54 aa).

Positions 1-21 (MKTPLFLLLVVLASLLGLALS) are cleaved as a signal peptide. Glutamine 22 bears the Pyrrolidone carboxylic acid mark. A glycan (N-linked (GlcNAc...) asparagine) is linked at asparagine 25. Cysteines 40 and 52 form a disulfide. Residues 53–54 (RK) constitute a propeptide that is removed on maturation.

The protein to paragonial peptide B. As to expression, ductus ejaculatorius.

Its subcellular location is the secreted. In terms of biological role, induces post-mating responses; increased oviposition and reduced receptivity. The polypeptide is Ductus ejaculatorius peptide 99B (Dup99B) (Drosophila melanogaster (Fruit fly)).